Here is a 366-residue protein sequence, read N- to C-terminus: MESIIARPRTRSSAKEKTQTMSAKKISANGNNIAVQAKSKRNTPLGVIKLARLHTLESLLCVYPAIWGACLSAGSHQKVFTPSSFLSVLFANWISMTIAHMAFCTFNDIVDRNFDGKVERTKVRPLPAGMISLRSAIIAFIVEMGLTVYISYATLGFDGALVCAPVWIASTIYPFMKRVVQWPQLVLGPIIGMAVFPGWVSVAGNLDTLRDAVPMFLATSAWVVYFDTIYATQDTNDDKKIGVKSLAVLFHNHMHQFLGFLGSIQIALLSFTARKANMSALFWSLGVCVWGLNIPFHLLSLDTKNPKTGGKVFLMNILLGLWITIVCVIELWTTTVMHLDVNDFLLKTVVHNITLTAQNIRSSVAF.

The tract at residues 1–22 is disordered; that stretch reads MESIIARPRTRSSAKEKTQTMS. 7 helical membrane-spanning segments follow: residues 53–73, 85–105, 137–157, 160–180, 185–205, 212–232, and 253–273; these read LHTL…CLSA, FLSV…AFCT, IIAF…TLGF, ALVC…KRVV, LVLG…VAGN, AVPM…IYAT, and HMHQ…SFTA. N277 is a glycosylation site (N-linked (GlcNAc...) asparagine). 2 consecutive transmembrane segments (helical) span residues 281–301 and 312–332; these read LFWS…LLSL and VFLM…IELW. A glycan (N-linked (GlcNAc...) asparagine) is linked at N352.

This sequence belongs to the UbiA prenyltransferase family. It depends on Mg(2+) as a cofactor.

It is found in the membrane. It participates in secondary metabolite biosynthesis; terpenoid biosynthesis. Polyprenyl transferase; part of the gene cluster that mediates the biosynthesis of sesquiterpenyl epoxy-cyclohexenoids (SECs) such as anthrobotrisins and arthrosporols, metabolites that possess a novel hybrid carbon skeleton consisting of a polyketide-derived epoxycyclohexenol combined with a terpenoid-derived monocyclic sesquiterpenol substructure (PKS-PTS hybrid). The SEC pathway plays an important role for fungal soil colonization via decreasing fungal nematode-capturing ability. Within the pathway, the polyprenyl transferase catalyzes the farnesylation of toluquinol to yield farnesyl hydroquinone, the first hybrid precursor for biosynthesis of SECs, and farnesyl quinone (34) might be the key precursor for the epoxy ring formation. The pathway begins with the biosynthesis of 6-methylsalicylic acid (6-MSA), the first precursor of the polyketide-derived epoxycyclohexenol in arthrosporols, by the polyketide synthase (PKS) AOL_s00215g283 via condensation of 1 acetate and 3 malonate units. The 6-methylsalicylic acid decarboxylase AOL_s00215g281 then catalyzes the decarboxylation of 6-methylsalicylic acid to yield m-cresol. The cytochrome P450 monooxygenase AOL_s00215g282 further oxidizes m-cresol to yield toluquinol. With the assistance of the oxidoreductase AOL_s00215g277, the polyprenyl transferase AOL_s00215g276 catalyzes the farnesylation of toluquinol to produce farnesyl hydroquinone, the hybrid precursor for biosynthesis of SECs. Farnesyl hydroquinone undergoes epoxidation and then subsequent dehydrogenation to form farnesyl epoxy-quinone, the first and simplest SEC. The cytochrome P450 monooxygenase AOL_s00215g278 and the FAD-dependent monooxygenase AOL_s00215g279 might be involved in the oxygenation of the phenol moiety, most likely in the epoxy formation. The cytochrome P450 monooxygenases AOL_s00215g274 and AOL_s00215g280 are involved in specific regional ketone reductions at respectively C-4 and C-1 of farnesyl epoxy-quinone PubMed:33823587. The protein is Polyprenyl transferase AOL_s00215g276 of Arthrobotrys oligospora (strain ATCC 24927 / CBS 115.81 / DSM 1491) (Nematode-trapping fungus).